The sequence spans 212 residues: MNNSLIVRQLGLQDYQEIWHKMQDFTDTRNAETQDEIWLVQHYPVFTQGQAGKPEHLLQRSEIPVVQSDRGGQITYHAPGQQVMYVLIDIKRHKNLNVRQLVTALEQTVVKTLAEYGIESYPKPDAPGVYVDGKKICSLGLRIRRGCSFHGLALNINMDLNPFHYINPCGYAGLEMCQLADFVNQDEADCDNVSAKLIKHFADLLGYNITTL.

The BPL/LPL catalytic domain maps to 31–209; sequence AETQDEIWLV…HFADLLGYNI (179 aa). Residues 70-77, 138-140, and 151-153 contribute to the substrate site; these read RGGQITYH, SLG, and GLA. The active-site Acyl-thioester intermediate is C169.

It belongs to the LipB family.

Its subcellular location is the cytoplasm. It catalyses the reaction octanoyl-[ACP] + L-lysyl-[protein] = N(6)-octanoyl-L-lysyl-[protein] + holo-[ACP] + H(+). The protein operates within protein modification; protein lipoylation via endogenous pathway; protein N(6)-(lipoyl)lysine from octanoyl-[acyl-carrier-protein]: step 1/2. Catalyzes the transfer of endogenously produced octanoic acid from octanoyl-acyl-carrier-protein onto the lipoyl domains of lipoate-dependent enzymes. Lipoyl-ACP can also act as a substrate although octanoyl-ACP is likely to be the physiological substrate. In Haemophilus influenzae (strain PittEE), this protein is Octanoyltransferase.